The following is a 345-amino-acid chain: Twinfilin (345 aa).

2 consecutive ADF-H domains span residues 4-139 (QTGI…KHKR) and 177-312 (GISC…DELH). Positions 320–345 (PAFAKPKGPPNRGAKRLTRPSNEDQV) are disordered.

This sequence belongs to the actin-binding proteins ADF family. Twinfilin subfamily. In terms of assembly, interacts with G-actin; ADP-actin form.

It is found in the cytoplasm. Its subcellular location is the cytoskeleton. The protein resides in the cell cortex. Actin-binding protein involved in motile and morphological processes. Inhibits actin polymerization, likely by sequestering G-actin. In Drosophila pseudoobscura pseudoobscura (Fruit fly), this protein is Twinfilin (twf).